The primary structure comprises 362 residues: Phosphoserine aminotransferase (362 aa).

Residue Arg-42 coordinates L-glutamate. Residues 76–77 (AR), Trp-102, Thr-152, Asp-172, and Gln-195 contribute to the pyridoxal 5'-phosphate site. Lys-196 bears the N6-(pyridoxal phosphate)lysine mark. Residue 237 to 238 (NT) coordinates pyridoxal 5'-phosphate.

Belongs to the class-V pyridoxal-phosphate-dependent aminotransferase family. SerC subfamily. As to quaternary structure, homodimer. Requires pyridoxal 5'-phosphate as cofactor.

The protein localises to the cytoplasm. The catalysed reaction is O-phospho-L-serine + 2-oxoglutarate = 3-phosphooxypyruvate + L-glutamate. It carries out the reaction 4-(phosphooxy)-L-threonine + 2-oxoglutarate = (R)-3-hydroxy-2-oxo-4-phosphooxybutanoate + L-glutamate. It functions in the pathway amino-acid biosynthesis; L-serine biosynthesis; L-serine from 3-phospho-D-glycerate: step 2/3. The protein operates within cofactor biosynthesis; pyridoxine 5'-phosphate biosynthesis; pyridoxine 5'-phosphate from D-erythrose 4-phosphate: step 3/5. Catalyzes the reversible conversion of 3-phosphohydroxypyruvate to phosphoserine and of 3-hydroxy-2-oxo-4-phosphonooxybutanoate to phosphohydroxythreonine. This is Phosphoserine aminotransferase from Haemophilus influenzae (strain ATCC 51907 / DSM 11121 / KW20 / Rd).